Here is a 940-residue protein sequence, read N- to C-terminus: UvrABC system protein A (940 aa).

An ATP-binding site is contributed by 31-38 (GLSGSGKS). Residues 252–279 (CPHCGYSMQELEPRLFSFNNPAGACGTC) form a C4-type zinc finger. ABC transporter domains lie at 309–586 (WDQK…PDSL) and 606–936 (RDKN…RFLK). An ATP-binding site is contributed by 639–646 (GVSGSGKS). The C4-type zinc-finger motif lies at 739–765 (CEACQGDGVIKVEMHFLPDVYVPCDVC).

It belongs to the ABC transporter superfamily. UvrA family. Forms a heterotetramer with UvrB during the search for lesions.

It is found in the cytoplasm. The UvrABC repair system catalyzes the recognition and processing of DNA lesions. UvrA is an ATPase and a DNA-binding protein. A damage recognition complex composed of 2 UvrA and 2 UvrB subunits scans DNA for abnormalities. When the presence of a lesion has been verified by UvrB, the UvrA molecules dissociate. The sequence is that of UvrABC system protein A from Vibrio vulnificus (strain YJ016).